The chain runs to 545 residues: Chaperonin GroEL (545 aa).

ATP is bound by residues 29–32 (TMGP), Lys50, 86–90 (DGTTT), Gly414, 477–479 (DAA), and Asp493.

This sequence belongs to the chaperonin (HSP60) family. Forms a cylinder of 14 subunits composed of two heptameric rings stacked back-to-back. Interacts with the co-chaperonin GroES.

It localises to the cytoplasm. It catalyses the reaction ATP + H2O + a folded polypeptide = ADP + phosphate + an unfolded polypeptide.. Together with its co-chaperonin GroES, plays an essential role in assisting protein folding. The GroEL-GroES system forms a nano-cage that allows encapsulation of the non-native substrate proteins and provides a physical environment optimized to promote and accelerate protein folding. The sequence is that of Chaperonin GroEL from Campylobacter jejuni subsp. jejuni serotype O:2 (strain ATCC 700819 / NCTC 11168).